We begin with the raw amino-acid sequence, 188 residues long: GMP synthase [glutamine-hydrolyzing] subunit A (188 aa).

The Glutamine amidotransferase type-1 domain maps to 1 to 188 (MIVIMDNGGQ…RNFAELCGEL (188 aa)). The active-site Nucleophile is Cys78. Active-site residues include His165 and Glu167.

Heterodimer composed of a glutamine amidotransferase subunit (A) and a GMP-binding subunit (B).

It carries out the reaction XMP + L-glutamine + ATP + H2O = GMP + L-glutamate + AMP + diphosphate + 2 H(+). Its pathway is purine metabolism; GMP biosynthesis; GMP from XMP (L-Gln route): step 1/1. In terms of biological role, catalyzes the synthesis of GMP from XMP. The sequence is that of GMP synthase [glutamine-hydrolyzing] subunit A from Thermococcus kodakarensis (strain ATCC BAA-918 / JCM 12380 / KOD1) (Pyrococcus kodakaraensis (strain KOD1)).